The primary structure comprises 312 residues: Malate dehydrogenase (312 aa).

Residues Gly7–Gly13 and Asp34 contribute to the NAD(+) site. Residues Arg81 and Arg87 each contribute to the substrate site. NAD(+) contacts are provided by residues Asn94 and Ile117–Asn119. Residues Asn119 and Arg153 each contribute to the substrate site. Residue His177 is the Proton acceptor of the active site. Residue Met228 coordinates NAD(+).

This sequence belongs to the LDH/MDH superfamily. MDH type 1 family. As to quaternary structure, homodimer.

It carries out the reaction (S)-malate + NAD(+) = oxaloacetate + NADH + H(+). Catalyzes the reversible oxidation of malate to oxaloacetate. In Mannheimia succiniciproducens (strain KCTC 0769BP / MBEL55E), this protein is Malate dehydrogenase.